The primary structure comprises 617 residues: Probable potassium transport system protein Kup 3 (617 aa).

The next 11 membrane-spanning stretches (helical) occupy residues 42–62 (VASL…ALLI), 95–115 (LVVG…TPAI), 129–149 (PSLA…LFMM), 160–180 (IFGP…IHGI), 206–226 (VSFA…AMYA), 240–260 (WFAI…ALLI), 282–302 (LVAF…SGVF), 330–350 (IYVP…VLSF), 360–380 (YGIA…LVAI), 386–406 (PWLV…FFSA), and 411–431 (LFEG…MMLT).

It belongs to the HAK/KUP transporter (TC 2.A.72) family.

It is found in the cell inner membrane. It catalyses the reaction K(+)(in) + H(+)(in) = K(+)(out) + H(+)(out). Functionally, transport of potassium into the cell. Likely operates as a K(+):H(+) symporter. In Bradyrhizobium diazoefficiens (strain JCM 10833 / BCRC 13528 / IAM 13628 / NBRC 14792 / USDA 110), this protein is Probable potassium transport system protein Kup 3.